We begin with the raw amino-acid sequence, 114 residues long: T cell receptor alpha variable 24 (114 aa).

An N-terminal signal peptide occupies residues 1-22; the sequence is MEKNPLAAPLLILWFHLDCVSS. The Ig-like domain maps to 23–114; the sequence is ILNVEQSPQS…EDSATYLCAF (92 aa). Residue N42 is glycosylated (N-linked (GlcNAc...) asparagine). Cysteines 45 and 112 form a disulfide.

In terms of assembly, alpha-beta TR is a heterodimer composed of an alpha and beta chain; disulfide-linked. The alpha-beta TR is associated with the transmembrane signaling CD3 coreceptor proteins to form the TR-CD3 (TcR or TCR). The assembly of alpha-beta TR heterodimers with CD3 occurs in the endoplasmic reticulum where a single alpha-beta TR heterodimer associates with one CD3D-CD3E heterodimer, one CD3G-CD3E heterodimer and one CD247 homodimer forming a stable octameric structure. CD3D-CD3E and CD3G-CD3E heterodimers preferentially associate with TR alpha and TR beta chains, respectively. The association of the CD247 homodimer is the last step of TcR assembly in the endoplasmic reticulum and is required for transport to the cell surface.

The protein localises to the cell membrane. Its function is as follows. V region of the variable domain of T cell receptor (TR) alpha chain that participates in the antigen recognition. Alpha-beta T cell receptors are antigen specific receptors which are essential to the immune response and are present on the cell surface of T lymphocytes. Recognize peptide-major histocompatibility (MH) (pMH) complexes that are displayed by antigen presenting cells (APC), a prerequisite for efficient T cell adaptive immunity against pathogens. Binding of alpha-beta TR to pMH complex initiates TR-CD3 clustering on the cell surface and intracellular activation of LCK that phosphorylates the ITAM motifs of CD3G, CD3D, CD3E and CD247 enabling the recruitment of ZAP70. In turn ZAP70 phosphorylates LAT, which recruits numerous signaling molecules to form the LAT signalosome. The LAT signalosome propagates signal branching to three major signaling pathways, the calcium, the mitogen-activated protein kinase (MAPK) kinase and the nuclear factor NF-kappa-B (NF-kB) pathways, leading to the mobilization of transcription factors that are critical for gene expression and essential for T cell growth and differentiation. The T cell repertoire is generated in the thymus, by V-(D)-J rearrangement. This repertoire is then shaped by intrathymic selection events to generate a peripheral T cell pool of self-MH restricted, non-autoaggressive T cells. Post-thymic interaction of alpha-beta TR with the pMH complexes shapes TR structural and functional avidity. The chain is T cell receptor alpha variable 24 from Homo sapiens (Human).